A 117-amino-acid chain; its full sequence is Large ribosomal subunit protein bL19 (117 aa).

Belongs to the bacterial ribosomal protein bL19 family.

This protein is located at the 30S-50S ribosomal subunit interface and may play a role in the structure and function of the aminoacyl-tRNA binding site. The protein is Large ribosomal subunit protein bL19 of Photorhabdus laumondii subsp. laumondii (strain DSM 15139 / CIP 105565 / TT01) (Photorhabdus luminescens subsp. laumondii).